Reading from the N-terminus, the 292-residue chain is 4-hydroxybenzoate octaprenyltransferase (292 aa).

A run of 8 helical transmembrane segments spans residues 23–43 (PIGI…AGEG), 47–67 (PGVA…GCVI), 98–118 (LILF…MNWL), 141–161 (HLPQ…TFAA), 164–184 (GSIP…ALIY), 211–231 (YDRE…AGIG), 233–253 (YLGL…FSVY), and 270–290 (FLNN…DYLW).

This sequence belongs to the UbiA prenyltransferase family. Mg(2+) is required as a cofactor.

The protein localises to the cell inner membrane. The enzyme catalyses all-trans-octaprenyl diphosphate + 4-hydroxybenzoate = 4-hydroxy-3-(all-trans-octaprenyl)benzoate + diphosphate. The protein operates within cofactor biosynthesis; ubiquinone biosynthesis. Functionally, catalyzes the prenylation of para-hydroxybenzoate (PHB) with an all-trans polyprenyl group. Mediates the second step in the final reaction sequence of ubiquinone-8 (UQ-8) biosynthesis, which is the condensation of the polyisoprenoid side chain with PHB, generating the first membrane-bound Q intermediate 3-octaprenyl-4-hydroxybenzoate. This chain is 4-hydroxybenzoate octaprenyltransferase, found in Methylococcus capsulatus (strain ATCC 33009 / NCIMB 11132 / Bath).